Consider the following 565-residue polypeptide: MLIADDLEKLLEILPHFVREPLKQHSNRKNLIEVVMDLGRRPEARFPGNPEYLSQRSISWQDLDYCVKKVGNFSGDNRAGIEKTLHRISSMRNREGSIIGLTCRVGRAVFGTISIIRDLLEQGDSILLLGKPGVGKTTAVREIARVLSDEMEKRVVIIDTSNEIAGDGDIPHPAIGRARRMQVAQPDLQHQVMIEAVENHMPEVIIIDEIGTELEALAARTIAERGVQLVGTAHGNYLESLIKNPTLADLIGGIQYVTLGDDEAKRRGTQKSILERKAAPAFQIAIEIHDRKAWIVHEKVEETIDQILQGHQPFVQKRQIQDNGRILIKCYPSQSTEVLSTNSSSLQKMSSLKQKTHFLQQREVKNKTFDLNKLENRDTSLLSTTINTPVNINNHSFQVEASIQYLYAYSLSWQHITSVISALDLPIILTKEIEKSDAILALRSQVKQNTKLRQIAKSRQIIIYTIQNSTVPQITRALRKILNINTSSDLNWVKLCKSKKFYEIQALQEAKLAIEIIILNENSIVQLTPRSAYIRKMQHNLIDNYQLRARSFGEEPYRKLRIYPE.

Residue 130 to 137 (GKPGVGKT) participates in ATP binding. The R3H domain maps to 503–565 (EIQALQEAKL…PYRKLRIYPE (63 aa)).

The protein belongs to the ycf45 family.

It is found in the plastid. It localises to the chloroplast. This is an uncharacterized protein from Porphyra purpurea (Red seaweed).